The primary structure comprises 444 residues: Protein Z-dependent protease inhibitor (444 aa).

Positions 1-21 (MKVVPSLLLSVLLAQVWLVPG) are cleaved as a signal peptide. A disordered region spans residues 24–65 (PSPQSPETPAPQNQTSRVVQAPKEEEEDEQEASEEKASEEEK). Residue Asn-36 is glycosylated (N-linked (GlcNAc...) asparagine). Ser-56 is modified (phosphoserine; by FAM20C). The span at 56 to 65 (SEEKASEEEK) shows a compositional bias: basic and acidic residues. The interval 136 to 153 (TKPGLLPSLFKGLRETLS) is heparin-binding. Residues Asn-180, Asn-197, and Asn-295 are each glycosylated (N-linked (GlcNAc...) asparagine).

This sequence belongs to the serpin family. Interacts with PROZ. In terms of processing, phosphorylated by FAM20C in the extracellular medium. In terms of tissue distribution, expressed by the liver and secreted in plasma.

Its subcellular location is the secreted. Inhibits activity of the coagulation protease factor Xa in the presence of PROZ, calcium and phospholipids. Also inhibits factor XIa in the absence of cofactors. This chain is Protein Z-dependent protease inhibitor (SERPINA10), found in Homo sapiens (Human).